The primary structure comprises 187 residues: Threonylcarbamoyl-AMP synthase (187 aa).

Residues Thr-4–Leu-187 enclose the YrdC-like domain.

Belongs to the SUA5 family. TsaC subfamily.

The protein resides in the cytoplasm. It carries out the reaction L-threonine + hydrogencarbonate + ATP = L-threonylcarbamoyladenylate + diphosphate + H2O. Its function is as follows. Required for the formation of a threonylcarbamoyl group on adenosine at position 37 (t(6)A37) in tRNAs that read codons beginning with adenine. Catalyzes the conversion of L-threonine, HCO(3)(-)/CO(2) and ATP to give threonylcarbamoyl-AMP (TC-AMP) as the acyladenylate intermediate, with the release of diphosphate. This is Threonylcarbamoyl-AMP synthase from Xylella fastidiosa (strain M23).